The sequence spans 496 residues: L-arabinose isomerase (496 aa).

The Mn(2+) site is built by Glu-302, Glu-329, His-346, and His-445.

This sequence belongs to the arabinose isomerase family. Mn(2+) serves as cofactor.

The enzyme catalyses beta-L-arabinopyranose = L-ribulose. It participates in carbohydrate degradation; L-arabinose degradation via L-ribulose; D-xylulose 5-phosphate from L-arabinose (bacterial route): step 1/3. Catalyzes the conversion of L-arabinose to L-ribulose. The chain is L-arabinose isomerase from Thermotoga sp. (strain RQ2).